The following is a 158-amino-acid chain: MGHFTFIGLCLLAMFLSLSGAECYTCPIDWLPKNGLCYKVFSKHKTWFDAEMYCRKFKPGCHLASLHSNADAVEFSEYISDYLTGQGHVWIGLRDTKKKYIWEWTDRSRTDFLPWRKKQPDHFNNNEFCVEIVNFTGYLQWNDDNCAALRPFLCQCKY.

Positions 1–21 are cleaved as a signal peptide; the sequence is MGHFTFIGLCLLAMFLSLSGA. Intrachain disulfides connect cysteine 26/cysteine 37, cysteine 54/cysteine 154, cysteine 61/cysteine 156, and cysteine 129/cysteine 146. Residues 33-155 form the C-type lectin domain; it reads KNGLCYKVFS…CAALRPFLCQ (123 aa). Residues glutamine 119, aspartate 121, and glutamate 127 each contribute to the Ca(2+) site. The short motif at 119 to 121 is the Galactose-binding element; the sequence is QPD. A glycan (N-linked (GlcNAc...) asparagine) is linked at asparagine 134. Residues asparagine 142 and aspartate 143 each contribute to the Ca(2+) site.

The protein belongs to the true venom lectin family. Homodimer; non-covalently linked. As to expression, expressed by the venom gland.

It localises to the secreted. Galactose-binding lectin which recognizes specific carbohydrate structures and agglutinates a variety of animal cells by binding to cell-surface glycoproteins and glycolipids. May be a calcium-dependent lectin. In Bungarus fasciatus (Banded krait), this protein is C-type lectin BfL-1.